Consider the following 372-residue polypeptide: Alanine dehydrogenase 1 (372 aa).

Histidine 94 is a catalytic residue. 170–200 contacts NAD(+); sequence TYVIFGGGVAATNAANVALGLNAKVIIIELN.

Belongs to the AlaDH/PNT family.

The catalysed reaction is L-alanine + NAD(+) + H2O = pyruvate + NH4(+) + NADH + H(+). It functions in the pathway amino-acid degradation; L-alanine degradation via dehydrogenase pathway; NH(3) and pyruvate from L-alanine: step 1/1. Functionally, may play a role in cell wall synthesis as L-alanine is an important constituent of the peptidoglycan layer. The sequence is that of Alanine dehydrogenase 1 (ald1) from Staphylococcus aureus (strain MRSA252).